A 135-amino-acid polypeptide reads, in one-letter code: Mini-ribonuclease 3 (135 aa).

D19 is an active-site residue.

It belongs to the MrnC RNase family. In terms of assembly, homodimer. It depends on Mg(2+) as a cofactor.

It localises to the cytoplasm. Its function is as follows. Involved in correct processing of both the 5' and 3' ends of 23S rRNA precursor. Processes 30S rRNA precursor transcript even in absence of ribonuclease 3 (Rnc); Rnc processes 30S rRNA into smaller rRNA precursors. The chain is Mini-ribonuclease 3 from Gloeobacter violaceus (strain ATCC 29082 / PCC 7421).